The sequence spans 179 residues: Large ribosomal subunit protein uL5 (179 aa).

This sequence belongs to the universal ribosomal protein uL5 family. As to quaternary structure, part of the 50S ribosomal subunit; part of the 5S rRNA/L5/L18/L25 subcomplex. Contacts the 5S rRNA and the P site tRNA. Forms a bridge to the 30S subunit in the 70S ribosome.

Its function is as follows. This is one of the proteins that bind and probably mediate the attachment of the 5S RNA into the large ribosomal subunit, where it forms part of the central protuberance. In the 70S ribosome it contacts protein S13 of the 30S subunit (bridge B1b), connecting the 2 subunits; this bridge is implicated in subunit movement. Contacts the P site tRNA; the 5S rRNA and some of its associated proteins might help stabilize positioning of ribosome-bound tRNAs. The protein is Large ribosomal subunit protein uL5 of Desulfatibacillum aliphaticivorans.